Reading from the N-terminus, the 158-residue chain is Superoxide dismutase [Cu-Zn] (158 aa).

Positions 46, 48, and 63 each coordinate Cu cation. A disulfide bridge links Cys-57 with Cys-149. Residues His-63, His-71, His-80, and Asp-83 each contribute to the Zn(2+) site. Position 120 (His-120) interacts with Cu cation.

This sequence belongs to the Cu-Zn superoxide dismutase family. In terms of assembly, homodimer. The cofactor is Cu cation. Requires Zn(2+) as cofactor.

It localises to the cytoplasm. It carries out the reaction 2 superoxide + 2 H(+) = H2O2 + O2. In terms of biological role, destroys radicals which are normally produced within the cells and which are toxic to biological systems. This Onchocerca volvulus protein is Superoxide dismutase [Cu-Zn] (sod-1).